The primary structure comprises 101 residues: MFVKKGDKVRVIAGKDKGTEAVVLKALPKVNKVVVEGVGMIKKHQKPNAENPQGAIVEKEAPIHVSNVQVLDKNGVAGRVGYKVVDGKKVRYSKKSGEVLD.

The protein belongs to the universal ribosomal protein uL24 family. As to quaternary structure, part of the 50S ribosomal subunit.

Its function is as follows. One of two assembly initiator proteins, it binds directly to the 5'-end of the 23S rRNA, where it nucleates assembly of the 50S subunit. In terms of biological role, one of the proteins that surrounds the polypeptide exit tunnel on the outside of the subunit. In Streptococcus uberis (strain ATCC BAA-854 / 0140J), this protein is Large ribosomal subunit protein uL24.